The sequence spans 590 residues: Beta-fructofuranosidase, insoluble isoenzyme 4 (590 aa).

The signal sequence occupies residues 1-28 (MVMAPIPQPWHQWPFLILFFLVLFSCES). Substrate is bound by residues 71-74 (WIND) and glutamine 90. Aspartate 74 is a catalytic residue. Residue asparagine 94 is glycosylated (N-linked (GlcNAc...) asparagine). Substrate-binding positions include tryptophan 98 and 133-134 (WT). Asparagine 167 is a glycosylation site (N-linked (GlcNAc...) asparagine). Residue 198–199 (RD) coordinates substrate. The N-linked (GlcNAc...) asparagine glycan is linked to asparagine 247. Positions 253 and 287 each coordinate substrate. Asparagine 345 carries an N-linked (GlcNAc...) asparagine glycan. Residues cysteine 445 and cysteine 491 are joined by a disulfide bond. An N-linked (GlcNAc...) asparagine glycan is attached at asparagine 565.

It belongs to the glycosyl hydrolase 32 family. As to expression, expressed in leaves. Expressed at moderate levels in roots and flowers, and weakly in seeds.

It localises to the secreted. The protein resides in the extracellular space. Its subcellular location is the apoplast. The protein localises to the cell wall. The enzyme catalyses Hydrolysis of terminal non-reducing beta-D-fructofuranoside residues in beta-D-fructofuranosides.. Its function is as follows. May play a role in sucrose partitioning during seed development and in stress response. The polypeptide is Beta-fructofuranosidase, insoluble isoenzyme 4 (CIN4) (Oryza sativa subsp. japonica (Rice)).